The chain runs to 337 residues: tRNA N6-adenosine threonylcarbamoyltransferase (337 aa).

Fe cation-binding residues include histidine 111 and histidine 115. Residues 134-138, aspartate 167, glycine 180, and asparagine 272 each bind substrate; that span reads LVSGG. Aspartate 300 is a binding site for Fe cation.

Belongs to the KAE1 / TsaD family. Fe(2+) serves as cofactor.

The protein resides in the cytoplasm. It catalyses the reaction L-threonylcarbamoyladenylate + adenosine(37) in tRNA = N(6)-L-threonylcarbamoyladenosine(37) in tRNA + AMP + H(+). In terms of biological role, required for the formation of a threonylcarbamoyl group on adenosine at position 37 (t(6)A37) in tRNAs that read codons beginning with adenine. Is involved in the transfer of the threonylcarbamoyl moiety of threonylcarbamoyl-AMP (TC-AMP) to the N6 group of A37, together with TsaE and TsaB. TsaD likely plays a direct catalytic role in this reaction. The polypeptide is tRNA N6-adenosine threonylcarbamoyltransferase (Salmonella arizonae (strain ATCC BAA-731 / CDC346-86 / RSK2980)).